The primary structure comprises 116 residues: Iron-sulfur cluster insertion protein ErpA (116 aa).

Iron-sulfur cluster-binding residues include cysteine 44, cysteine 108, and cysteine 110.

Belongs to the HesB/IscA family. In terms of assembly, homodimer. Iron-sulfur cluster is required as a cofactor.

Required for insertion of 4Fe-4S clusters for at least IspG. The protein is Iron-sulfur cluster insertion protein ErpA of Shewanella oneidensis (strain ATCC 700550 / JCM 31522 / CIP 106686 / LMG 19005 / NCIMB 14063 / MR-1).